The following is a 156-amino-acid chain: Transcription elongation factor GreA (156 aa).

The stretch at 46 to 67 forms a coiled coil; it reads AEYHAAREKQSFIEGRIKELEA.

This sequence belongs to the GreA/GreB family.

Its function is as follows. Necessary for efficient RNA polymerase transcription elongation past template-encoded arresting sites. The arresting sites in DNA have the property of trapping a certain fraction of elongating RNA polymerases that pass through, resulting in locked ternary complexes. Cleavage of the nascent transcript by cleavage factors such as GreA or GreB allows the resumption of elongation from the new 3'terminus. GreA releases sequences of 2 to 3 nucleotides. In Cereibacter sphaeroides (strain ATCC 17029 / ATH 2.4.9) (Rhodobacter sphaeroides), this protein is Transcription elongation factor GreA.